We begin with the raw amino-acid sequence, 363 residues long: NAD(P)H-quinone oxidoreductase subunit 1, chloroplastic (363 aa).

The next 6 membrane-spanning stretches (helical) occupy residues 30–50 (LVPILTLVLGITIGVLVIVWL), 98–118 (FSIGPAIAVISILLSFSVIPF), 129–149 (IGIFLWIAISSIAPVGLLMSG), 248–268 (YSGIKFGLFYVASYLNLLLSS), 300–320 (IIGTTIGIFITLAKTYLFLFI), and 343–363 (FLLPISLGNLLLTTSFQLLSL).

The protein belongs to the complex I subunit 1 family. In terms of assembly, NDH is composed of at least 16 different subunits, 5 of which are encoded in the nucleus.

It is found in the plastid. The protein resides in the chloroplast thylakoid membrane. The enzyme catalyses a plastoquinone + NADH + (n+1) H(+)(in) = a plastoquinol + NAD(+) + n H(+)(out). The catalysed reaction is a plastoquinone + NADPH + (n+1) H(+)(in) = a plastoquinol + NADP(+) + n H(+)(out). NDH shuttles electrons from NAD(P)H:plastoquinone, via FMN and iron-sulfur (Fe-S) centers, to quinones in the photosynthetic chain and possibly in a chloroplast respiratory chain. The immediate electron acceptor for the enzyme in this species is believed to be plastoquinone. Couples the redox reaction to proton translocation, and thus conserves the redox energy in a proton gradient. The polypeptide is NAD(P)H-quinone oxidoreductase subunit 1, chloroplastic (Gossypium barbadense (Sea Island cotton)).